Here is a 152-residue protein sequence, read N- to C-terminus: 6,7-dimethyl-8-ribityllumazine synthase (152 aa).

5-amino-6-(D-ribitylamino)uracil is bound by residues Phe-18, 49 to 51 (ALE), and 75 to 77 (CVI). Residue 80-81 (ET) participates in (2S)-2-hydroxy-3-oxobutyl phosphate binding. The Proton donor role is filled by His-83. Asn-108 contacts 5-amino-6-(D-ribitylamino)uracil. (2S)-2-hydroxy-3-oxobutyl phosphate is bound at residue Arg-122.

The protein belongs to the DMRL synthase family.

It catalyses the reaction (2S)-2-hydroxy-3-oxobutyl phosphate + 5-amino-6-(D-ribitylamino)uracil = 6,7-dimethyl-8-(1-D-ribityl)lumazine + phosphate + 2 H2O + H(+). It participates in cofactor biosynthesis; riboflavin biosynthesis; riboflavin from 2-hydroxy-3-oxobutyl phosphate and 5-amino-6-(D-ribitylamino)uracil: step 1/2. In terms of biological role, catalyzes the formation of 6,7-dimethyl-8-ribityllumazine by condensation of 5-amino-6-(D-ribitylamino)uracil with 3,4-dihydroxy-2-butanone 4-phosphate. This is the penultimate step in the biosynthesis of riboflavin. This chain is 6,7-dimethyl-8-ribityllumazine synthase, found in Bartonella bacilliformis (strain ATCC 35685 / KC583 / Herrer 020/F12,63).